Reading from the N-terminus, the 141-residue chain is Hemoglobin subunit alpha-1/2 (141 aa).

The Globin domain occupies 1–141; it reads VLSPADKTNV…VSTVLTSKYR (141 aa). Phosphoserine is present on S3. K7 carries the N6-succinyllysine modification. T8 carries the post-translational modification Phosphothreonine. K11 is subject to N6-succinyllysine. N6-acetyllysine; alternate is present on K16. K16 carries the post-translational modification N6-succinyllysine; alternate. Phosphotyrosine is present on Y24. S35 carries the post-translational modification Phosphoserine. K40 is modified (N6-succinyllysine). The residue at position 49 (S49) is a Phosphoserine. H58 contacts O2. H87 is a heme b binding site. Position 102 is a phosphoserine (S102). A Phosphothreonine modification is found at T108. Phosphoserine is present on S124. A phosphothreonine mark is found at T134 and T137. Position 138 is a phosphoserine (S138).

The protein belongs to the globin family. As to quaternary structure, heterotetramer of two alpha chains and two beta chains. Red blood cells.

Functionally, involved in oxygen transport from the lung to the various peripheral tissues. In Mustela lutreola (European mink), this protein is Hemoglobin subunit alpha-1/2.